Consider the following 459-residue polypeptide: tRNA modification GTPase MnmE (459 aa).

(6S)-5-formyl-5,6,7,8-tetrahydrofolate contacts are provided by Arg-29, Glu-86, and Lys-125. A TrmE-type G domain is found at 221-382 (GMNVVIAGRP…LTEHLKAVMG (162 aa)). Residue Asn-231 coordinates K(+). Residues 231-236 (NAGKSS), 250-256 (TNIEGTT), and 275-278 (DTAG) each bind GTP. Ser-235 serves as a coordination point for Mg(2+). K(+) is bound by residues Thr-250, Ile-252, and Thr-255. Thr-256 provides a ligand contact to Mg(2+). Residue Lys-459 participates in (6S)-5-formyl-5,6,7,8-tetrahydrofolate binding.

Belongs to the TRAFAC class TrmE-Era-EngA-EngB-Septin-like GTPase superfamily. TrmE GTPase family. As to quaternary structure, homodimer. Heterotetramer of two MnmE and two MnmG subunits. K(+) is required as a cofactor.

It localises to the cytoplasm. Exhibits a very high intrinsic GTPase hydrolysis rate. Involved in the addition of a carboxymethylaminomethyl (cmnm) group at the wobble position (U34) of certain tRNAs, forming tRNA-cmnm(5)s(2)U34. The sequence is that of tRNA modification GTPase MnmE from Marinomonas sp. (strain MWYL1).